We begin with the raw amino-acid sequence, 252 residues long: Indole-3-glycerol phosphate synthase (252 aa).

This sequence belongs to the TrpC family.

It carries out the reaction 1-(2-carboxyphenylamino)-1-deoxy-D-ribulose 5-phosphate + H(+) = (1S,2R)-1-C-(indol-3-yl)glycerol 3-phosphate + CO2 + H2O. Its pathway is amino-acid biosynthesis; L-tryptophan biosynthesis; L-tryptophan from chorismate: step 4/5. The polypeptide is Indole-3-glycerol phosphate synthase (Leptospira interrogans serogroup Icterohaemorrhagiae serovar copenhageni (strain Fiocruz L1-130)).